The following is a 459-amino-acid chain: ATP-dependent protease ATPase subunit HslU (459 aa).

ATP contacts are provided by residues valine 26, 68-73 (GVGKTE), aspartate 271, glutamate 337, and arginine 409.

Belongs to the ClpX chaperone family. HslU subfamily. A double ring-shaped homohexamer of HslV is capped on each side by a ring-shaped HslU homohexamer. The assembly of the HslU/HslV complex is dependent on binding of ATP.

It is found in the cytoplasm. Functionally, ATPase subunit of a proteasome-like degradation complex; this subunit has chaperone activity. The binding of ATP and its subsequent hydrolysis by HslU are essential for unfolding of protein substrates subsequently hydrolyzed by HslV. HslU recognizes the N-terminal part of its protein substrates and unfolds these before they are guided to HslV for hydrolysis. The chain is ATP-dependent protease ATPase subunit HslU from Xylella fastidiosa (strain M12).